A 327-amino-acid polypeptide reads, in one-letter code: tRNA uridine(34) hydroxylase (327 aa).

The Rhodanese domain occupies leucine 130 to glutamate 224. The active-site Cysteine persulfide intermediate is the cysteine 184.

This sequence belongs to the TrhO family.

The enzyme catalyses uridine(34) in tRNA + AH2 + O2 = 5-hydroxyuridine(34) in tRNA + A + H2O. Catalyzes oxygen-dependent 5-hydroxyuridine (ho5U) modification at position 34 in tRNAs. This chain is tRNA uridine(34) hydroxylase, found in Streptococcus thermophilus (strain CNRZ 1066).